A 310-amino-acid chain; its full sequence is Acetylglutamate kinase (310 aa).

Residues 76 to 77 (GG), R98, and N203 contribute to the substrate site.

This sequence belongs to the acetylglutamate kinase family. ArgB subfamily.

It localises to the cytoplasm. The enzyme catalyses N-acetyl-L-glutamate + ATP = N-acetyl-L-glutamyl 5-phosphate + ADP. Its pathway is amino-acid biosynthesis; L-arginine biosynthesis; N(2)-acetyl-L-ornithine from L-glutamate: step 2/4. Catalyzes the ATP-dependent phosphorylation of N-acetyl-L-glutamate. This Cutibacterium acnes (strain DSM 16379 / KPA171202) (Propionibacterium acnes) protein is Acetylglutamate kinase.